Consider the following 73-residue polypeptide: Large ribosomal subunit protein bL27c (73 aa).

Belongs to the bacterial ribosomal protein bL27 family.

Its subcellular location is the plastid. It localises to the chloroplast. The sequence is that of Large ribosomal subunit protein bL27c (rpl27) from Haptolina hirta (Plankton alga).